Here is a 593-residue protein sequence, read N- to C-terminus: MRTDYCGAINTRHLGRTITLCGWVHRRRDHGGVIFIDLRDREGIVQIVCDPDNVAAFPIAEKIRNEFVLEITGLVRHRPEGTVNRGIPSGEIEVLVSTIEILNPSLTPPFQMDDDNLSEAIRLEYRYLDLRRPAMQHNIRLRHKVTMATRVFLDQHGFIDVETPMLTKSTPEGARDYLVPSRVNVGCFFALPQSPQLFKQLLMVSGFDRYYQITRCFRDEDLRADRQPEFTQIDIETSFLQENDIMDLMEDMIRRLFADVINVSLPDPFPRISYADAMFRYGSDKPDLRVPLELTELTDLMQDVPFQVFRDAAQKPGGRVAALRVPGGGELSRKEIDEYTRFVGIYGAKGLAYIKINDLTKGMEGLQSPILKFLPEPVVQSMLERTQAQNGDLVFFGADKVKTVNDALGALRVKIGHERGLATNLWQPLWVVDFPMFEWDEEEKRWQALHHPFTAPSQGHEDFLATDPGKALSRAYDMVLNGMEIGGGSIRIHRQDVQSKVFQALNIADDEAKLKFGFLLDALQYGAPPHGGIAFGLDRIVAMMTGTDSIRDVIAFPKTQRAQCLLTQAPSTVEEKQLRELHIRLRKTDITTD.

Glutamate 172 contributes to the L-aspartate binding site. The segment at glutamine 196–lysine 199 is aspartate. Arginine 218 is an L-aspartate binding site. ATP-binding positions include arginine 218–glutamate 220 and glutamine 227. Histidine 450 contributes to the L-aspartate binding site. Residue glutamate 484 participates in ATP binding. L-aspartate is bound at residue arginine 491. Glycine 536 to arginine 539 is an ATP binding site.

Belongs to the class-II aminoacyl-tRNA synthetase family. Type 1 subfamily. In terms of assembly, homodimer.

It localises to the cytoplasm. The catalysed reaction is tRNA(Asx) + L-aspartate + ATP = L-aspartyl-tRNA(Asx) + AMP + diphosphate. Its function is as follows. Aspartyl-tRNA synthetase with relaxed tRNA specificity since it is able to aspartylate not only its cognate tRNA(Asp) but also tRNA(Asn). Reaction proceeds in two steps: L-aspartate is first activated by ATP to form Asp-AMP and then transferred to the acceptor end of tRNA(Asp/Asn). The polypeptide is Aspartate--tRNA(Asp/Asn) ligase (Nitrosomonas eutropha (strain DSM 101675 / C91 / Nm57)).